The sequence spans 183 residues: UPF0200 protein MmarC7_0527 (183 aa).

8 to 15 provides a ligand contact to ATP; it reads GMPGSGKS.

It belongs to the UPF0200 family.

This chain is UPF0200 protein MmarC7_0527, found in Methanococcus maripaludis (strain C7 / ATCC BAA-1331).